Consider the following 382-residue polypeptide: Carbamoyl phosphate synthase small chain (382 aa).

Residues 1–187 are CPSase; sequence MPTPALLVLA…EFRPQTATEE (187 aa). The L-glutamine site is built by Ser47, Gly239, and Gly241. The region spanning 191 to 377 is the Glutamine amidotransferase type-1 domain; it reads TVVAIDFGVK…VAQMRAYRQQ (187 aa). The Nucleophile role is filled by Cys267. Residues Leu268, Gln271, Asn307, Gly309, and Phe310 each coordinate L-glutamine. Residues His350 and Glu352 contribute to the active site.

Belongs to the CarA family. Composed of two chains; the small (or glutamine) chain promotes the hydrolysis of glutamine to ammonia, which is used by the large (or ammonia) chain to synthesize carbamoyl phosphate. Tetramer of heterodimers (alpha,beta)4.

The catalysed reaction is hydrogencarbonate + L-glutamine + 2 ATP + H2O = carbamoyl phosphate + L-glutamate + 2 ADP + phosphate + 2 H(+). It carries out the reaction L-glutamine + H2O = L-glutamate + NH4(+). Its pathway is amino-acid biosynthesis; L-arginine biosynthesis; carbamoyl phosphate from bicarbonate: step 1/1. The protein operates within pyrimidine metabolism; UMP biosynthesis via de novo pathway; (S)-dihydroorotate from bicarbonate: step 1/3. Small subunit of the glutamine-dependent carbamoyl phosphate synthetase (CPSase). CPSase catalyzes the formation of carbamoyl phosphate from the ammonia moiety of glutamine, carbonate, and phosphate donated by ATP, constituting the first step of 2 biosynthetic pathways, one leading to arginine and/or urea and the other to pyrimidine nucleotides. The small subunit (glutamine amidotransferase) binds and cleaves glutamine to supply the large subunit with the substrate ammonia. This is Carbamoyl phosphate synthase small chain from Thermosynechococcus vestitus (strain NIES-2133 / IAM M-273 / BP-1).